A 344-amino-acid chain; its full sequence is MIDFVKSRDTVIQKSFFEEFNSQNREMGSFAYSGNSESVWTGENITSIWKTILINETGSYCVAARPMTMDGAEFNLDLMGYSVSEDQINNDEIGIWNYISVAEMGGVLLFLSYWIWTCLHFSKIIFPAQKVICLYIFLFALNQTLQECIEEYVFSSECIKYRQFYSVYEIIDFLRTNFYRLFVIYCALGFGITRTVPKYLMIKGISIVIALCSVYWISLYKDVYVVSEIFDMIQYEVFPAIWVYSICHLLKQCTSVTTYENASKARFFRRMLNAFIFIFCASPMLHYLSNIIFGNFDYRLSVIIGDLFTFMEKIAFPCYIMFPTHNEALAYNRNVAEEAQEKMI.

Topologically, residues 1-98 (MIDFVKSRDT…NNDEIGIWNY (98 aa)) are cytoplasmic. A helical membrane pass occupies residues 99–119 (ISVAEMGGVLLFLSYWIWTCL). Residue H120 is a topological domain, lumenal. The chain crosses the membrane as a helical span at residues 121-141 (FSKIIFPAQKVICLYIFLFAL). The Cytoplasmic portion of the chain corresponds to 142–169 (NQTLQECIEEYVFSSECIKYRQFYSVYE). A helical transmembrane segment spans residues 170–192 (IIDFLRTNFYRLFVIYCALGFGI). Topologically, residues 193 to 198 (TRTVPK) are lumenal. Residues 199-219 (YLMIKGISIVIALCSVYWISL) traverse the membrane as a helical segment. Over 220-222 (YKD) the chain is Cytoplasmic. A helical transmembrane segment spans residues 223-243 (VYVVSEIFDMIQYEVFPAIWV). Over 244 to 273 (YSICHLLKQCTSVTTYENASKARFFRRMLN) the chain is Lumenal. A helical transmembrane segment spans residues 274–294 (AFIFIFCASPMLHYLSNIIFG). At 295–344 (NFDYRLSVIIGDLFTFMEKIAFPCYIMFPTHNEALAYNRNVAEEAQEKMI) the chain is on the cytoplasmic side.

Its subcellular location is the endoplasmic reticulum membrane. This is an uncharacterized protein from Schizosaccharomyces pombe (strain 972 / ATCC 24843) (Fission yeast).